Reading from the N-terminus, the 201-residue chain is Translation initiation factor IF-3 (201 aa).

Residues 170–201 form a disordered region; the sequence is TPKSASKKGHTPPKTQVEASKQANESAETEEE. The segment covering 182 to 195 has biased composition (polar residues); sequence PKTQVEASKQANES.

Belongs to the IF-3 family. As to quaternary structure, monomer.

It localises to the cytoplasm. Its function is as follows. IF-3 binds to the 30S ribosomal subunit and shifts the equilibrium between 70S ribosomes and their 50S and 30S subunits in favor of the free subunits, thus enhancing the availability of 30S subunits on which protein synthesis initiation begins. The polypeptide is Translation initiation factor IF-3 (Porphyromonas gingivalis (strain ATCC BAA-308 / W83)).